We begin with the raw amino-acid sequence, 433 residues long: Serine--tRNA ligase (433 aa).

235–237 contacts L-serine; that stretch reads TSE. An ATP-binding site is contributed by 266–268; that stretch reads RSE. Glutamate 289 contributes to the L-serine binding site. An ATP-binding site is contributed by 353–356; the sequence is EISS. Serine 388 contributes to the L-serine binding site.

Belongs to the class-II aminoacyl-tRNA synthetase family. Type-1 seryl-tRNA synthetase subfamily. As to quaternary structure, homodimer. The tRNA molecule binds across the dimer.

Its subcellular location is the cytoplasm. It carries out the reaction tRNA(Ser) + L-serine + ATP = L-seryl-tRNA(Ser) + AMP + diphosphate + H(+). The enzyme catalyses tRNA(Sec) + L-serine + ATP = L-seryl-tRNA(Sec) + AMP + diphosphate + H(+). It functions in the pathway aminoacyl-tRNA biosynthesis; selenocysteinyl-tRNA(Sec) biosynthesis; L-seryl-tRNA(Sec) from L-serine and tRNA(Sec): step 1/1. Functionally, catalyzes the attachment of serine to tRNA(Ser). Is also able to aminoacylate tRNA(Sec) with serine, to form the misacylated tRNA L-seryl-tRNA(Sec), which will be further converted into selenocysteinyl-tRNA(Sec). This Burkholderia pseudomallei (strain 668) protein is Serine--tRNA ligase.